Reading from the N-terminus, the 694-residue chain is MNMETKNGSPVPAGDYSGERDSADITEHEQMDVKPKTNGDSKADRKAANAKDPSRPRRKKARRACFACQRAHLTCGDERPCQRCIKRGLQDACHDGVRKKAKYLHDAPDGALMPAVSSNTNLYNNTLRNNLPISRNGTNAVNSNQQHSQQHPQQPTNPTNNNFYPTPQTQTGSYNPYQESSMGQSPFTTQSPVSPTFNMKSSTNGRNPSLSSTVNQQPTPSTALSGDTSQSQNPFAGPFFDPSDPALFNFDLSSMNFENRYGALEFGMLGHMATGAAGDSPTDSAGQRGSIGRSGSAQFSTPAPGFGESPGNQPFMFGDPLLNEWSAGPASGQHVNVGGVYAPNTMLPEHMKANAPHAFAIESGPASFTSPGSAPSPNIPTAAFDDGPFNNIAPAPKSNSLVPNGQRQVTASILKHPNLQVGPKRRHRNPSSIYESVKEPYAYTSGFHNLTAFIQRRFTPQKTVRIAKALASIRPSFIATTKTLNRDDLIFMEKCFQRTLWEYEDFINACGTPTIVCRRTGEIAAVGKEFSILTGWKKDVLLGKETNLNVNTGGSAVPQSGTTSRGSFTPRGSTLENSGTGRPQPVFLAELLDDDSVVEFYEDFARLAFGDSRGSVMTRCKLLKYKTKEDMEVAQSDDNGKWNNHLRKGGIAGEAGMNQLGFKDGKVDCAYCWTVKRDVFDIPMLIVMNFLPCI.

The tract at residues 1–61 (MNMETKNGSP…DPSRPRRKKA (61 aa)) is disordered. Residues 17 to 55 (SGERDSADITEHEQMDVKPKTNGDSKADRKAANAKDPSR) are compositionally biased toward basic and acidic residues. The segment at residues 65–93 (CFACQRAHLTCGDERPCQRCIKRGLQDAC) is a DNA-binding region (zn(2)-C6 fungal-type). Disordered regions lie at residues 126-240 (TLRN…GPFF), 276-300 (AAGD…AQFS), and 552-582 (TGGS…GTGR). Residues 132-141 (PISRNGTNAV) show a composition bias toward polar residues. Low complexity predominate over residues 142–171 (NSNQQHSQQHPQQPTNPTNNNFYPTPQTQT). Composition is skewed to polar residues over residues 172–234 (GSYN…SQNP), 281–300 (PTDS…AQFS), and 552–581 (TGGS…SGTG).

Belongs to the ERT1/acuK family.

Its subcellular location is the nucleus. Its function is as follows. Transcription factor which regulates nonfermentable carbon utilization. Activator of gluconeogenetic genes. The polypeptide is Transcription activator of gluconeogenesis Pc22g08580 (Penicillium rubens (strain ATCC 28089 / DSM 1075 / NRRL 1951 / Wisconsin 54-1255) (Penicillium chrysogenum)).